A 210-amino-acid chain; its full sequence is Signal peptidase complex catalytic subunit SEC11 (210 aa).

Residues 1-21 (MLAGLSPHLSNLRRSLTQVLN) are Cytoplasmic-facing. The helical; Signal-anchor for type II membrane protein transmembrane segment at 22-38 (FALVLSTAFMMWKGLSI) threads the bilayer. At 39 to 210 (YTNSSSPIVV…MGAMVILQRE (172 aa)) the chain is on the lumenal side. The N-linked (GlcNAc...) asparagine glycan is linked to asparagine 41. Catalysis depends on charge relay system residues serine 53, histidine 92, and aspartate 152. The interval 196–207 (VLLGIMGAMVIL) is C-terminal short (CTS) helix.

Belongs to the peptidase S26B family. Component of the signal peptidase complex (SPC) composed of a catalytic subunit SEC11 and three accessory subunits SPC1, SPC2 and SPC3. The complex induces a local thinning of the ER membrane which is used to measure the length of the signal peptide (SP) h-region of protein substrates. This ensures the selectivity of the complex towards h-regions shorter than 18-20 amino acids. SPC associates with the translocon complex.

Its subcellular location is the endoplasmic reticulum membrane. The enzyme catalyses Cleavage of hydrophobic, N-terminal signal or leader sequences from secreted and periplasmic proteins.. Catalytic component of the signal peptidase complex (SPC) which catalyzes the cleavage of N-terminal signal sequences from nascent proteins as they are translocated into the lumen of the endoplasmic reticulum. Specifically cleaves N-terminal signal peptides that contain a hydrophobic alpha-helix (h-region) shorter than 18-20 amino acids. This is Signal peptidase complex catalytic subunit SEC11 (SEC11) from Coccidioides posadasii (strain RMSCC 757 / Silveira) (Valley fever fungus).